The following is a 1157-amino-acid chain: DNA-directed RNA polymerase subunit beta (1157 aa).

Belongs to the RNA polymerase beta chain family. In terms of assembly, the RNAP catalytic core consists of 2 alpha, 1 beta, 1 beta' and 1 omega subunit. When a sigma factor is associated with the core the holoenzyme is formed, which can initiate transcription.

It catalyses the reaction RNA(n) + a ribonucleoside 5'-triphosphate = RNA(n+1) + diphosphate. Its function is as follows. DNA-dependent RNA polymerase catalyzes the transcription of DNA into RNA using the four ribonucleoside triphosphates as substrates. The polypeptide is DNA-directed RNA polymerase subunit beta (Tropheryma whipplei (strain TW08/27) (Whipple's bacillus)).